The sequence spans 724 residues: Catalase-peroxidase (724 aa).

Positions 98 to 226 (WHSAGSYRIA…LAAVMMGLIY (129 aa)) form a cross-link, tryptophyl-tyrosyl-methioninium (Trp-Tyr) (with M-252). His99 functions as the Proton acceptor in the catalytic mechanism. The segment at residues 226 to 252 (YVNPEGVDGHPDPQKTANDVRVTFARM) is a cross-link (tryptophyl-tyrosyl-methioninium (Tyr-Met) (with W-98)). His267 serves as a coordination point for heme b.

Belongs to the peroxidase family. Peroxidase/catalase subfamily. In terms of assembly, homodimer or homotetramer. Heme b is required as a cofactor. In terms of processing, formation of the three residue Trp-Tyr-Met cross-link is important for the catalase, but not the peroxidase activity of the enzyme.

The enzyme catalyses H2O2 + AH2 = A + 2 H2O. It catalyses the reaction 2 H2O2 = O2 + 2 H2O. Functionally, bifunctional enzyme with both catalase and broad-spectrum peroxidase activity. This Edwardsiella tarda protein is Catalase-peroxidase.